The primary structure comprises 308 residues: tRNA dimethylallyltransferase (308 aa).

Position 14-21 (Gly-14–Ser-21) interacts with ATP. Substrate is bound at residue Thr-16–Ser-21. The interval Asp-39–Gln-42 is interaction with substrate tRNA.

It belongs to the IPP transferase family. Monomer. It depends on Mg(2+) as a cofactor.

The enzyme catalyses adenosine(37) in tRNA + dimethylallyl diphosphate = N(6)-dimethylallyladenosine(37) in tRNA + diphosphate. In terms of biological role, catalyzes the transfer of a dimethylallyl group onto the adenine at position 37 in tRNAs that read codons beginning with uridine, leading to the formation of N6-(dimethylallyl)adenosine (i(6)A). The chain is tRNA dimethylallyltransferase from Bradyrhizobium sp. (strain ORS 278).